The following is a 338-amino-acid chain: Microtubule-associated protein RP/EB family member 2 (338 aa).

The segment at 1–21 (MPGPTQALSPNGENNNDIIQD) is disordered. In terms of domain architecture, Calponin-homology (CH) spans 57-159 (TMSRHDIIAW…FIQWFKKFFD (103 aa)). Disordered stretches follow at residues 171-241 (EARQ…KDLE) and 300-338 (SEEH…FHFV). Over residues 200 to 234 (SPTAGAAKSSPASKPGSTPSRPSSAKKAAPSSSAS) the composition is skewed to low complexity. In terms of domain architecture, EB1 C-terminal spans 236 to 306 (SDKDLETQVI…LYASEEHESH (71 aa)). The segment covering 300 to 327 (SEEHESHTEEHEGEEQVHEQPSSRRSTD) has biased composition (basic and acidic residues). The span at 328–338 (SRSVSDNFHFV) shows a compositional bias: low complexity.

Belongs to the MAPRE family.

Its subcellular location is the cytoplasm. It is found in the cytoskeleton. Its function is as follows. May be involved in microtubule polymerization, and spindle function by stabilizing microtubules and anchoring them at centrosomes. This chain is Microtubule-associated protein RP/EB family member 2 (MAPRE2), found in Gallus gallus (Chicken).